We begin with the raw amino-acid sequence, 263 residues long: Chymotrypsinogen B (263 aa).

The N-terminal stretch at 1-18 (MASLWLLSCFSLVGAAFG) is a signal peptide. 5 cysteine pairs are disulfide-bonded: Cys19/Cys140, Cys60/Cys76, Cys154/Cys219, Cys186/Cys200, and Cys209/Cys238. Positions 34–261 (IVNGEDAVPG…LIPWVQKILA (228 aa)) constitute a Peptidase S1 domain. His75 serves as the catalytic Charge relay system. Ser93 is subject to Phosphoserine. Asp120 (charge relay system) is an active-site residue. The active-site Charge relay system is the Ser213.

This sequence belongs to the peptidase S1 family.

It localises to the secreted. The protein resides in the extracellular space. The catalysed reaction is Preferential cleavage: Tyr-|-Xaa, Trp-|-Xaa, Phe-|-Xaa, Leu-|-Xaa.. This is Chymotrypsinogen B from Homo sapiens (Human).